Here is a 185-residue protein sequence, read N- to C-terminus: Inner membrane lipoprotein DcrB (185 aa).

A signal peptide spans 1–19 (MRNLVKYVGIGLLVMGLAA). A lipid anchor (N-palmitoyl cysteine) is attached at Cys20. Cys20 carries S-diacylglycerol cysteine lipidation.

This sequence belongs to the DcrB family.

The protein localises to the cell membrane. Its function is as follows. Plays a role in cell envelope biogenesis, maintenance of cell envelope integrity and membrane homeostasis. Essential for lipoprotein maturation under conditions where membrane fluidity may be altered. This chain is Inner membrane lipoprotein DcrB, found in Shigella flexneri.